Consider the following 299-residue polypeptide: Telomere repeat-binding factor 2 (299 aa).

The HTH myb-type domain occupies 1-61; sequence MGAPKQKWTP…KWRNISVTAL (61 aa). The segment at residues 28 to 57 is a DNA-binding region (H-T-H motif); the sequence is WRTILSDTEFSLILKSRSNVDLKDKWRNIS. Positions 93 to 116 are disordered; sequence LTNDDERAKPTSPGGSGGGSPRTC. In terms of domain architecture, H15 spans 121–189; that stretch reads SITSLDKIIF…KIKHKYRFSS (69 aa). Residues 243–288 adopt a coiled-coil conformation; it reads EAAEAAARAVAEAEFAITEAEQAAKEAERAEAEAEAAQIFAKAAMK.

Belongs to the histone H1/H5 family. SMH subfamily. Forms a homodimer and heterodimers with TRB1 or TRB3. Interacts with TRB1 and TRB3. In terms of tissue distribution, ubiquitous.

The protein resides in the nucleus. Its subcellular location is the nucleolus. The protein localises to the chromosome. Functionally, binds preferentially double-stranded telomeric repeats, but it can also bind to the single G-rich telomeric strand. This is Telomere repeat-binding factor 2 (TRB2) from Arabidopsis thaliana (Mouse-ear cress).